A 132-amino-acid polypeptide reads, in one-letter code: Small ribosomal subunit protein uS8 (132 aa).

Belongs to the universal ribosomal protein uS8 family. As to quaternary structure, part of the 30S ribosomal subunit. Contacts proteins S5 and S12.

Functionally, one of the primary rRNA binding proteins, it binds directly to 16S rRNA central domain where it helps coordinate assembly of the platform of the 30S subunit. The polypeptide is Small ribosomal subunit protein uS8 (Staphylococcus carnosus (strain TM300)).